The primary structure comprises 461 residues: Cysteine--tRNA ligase (461 aa).

Cys-28 contributes to the Zn(2+) binding site. Positions 30-40 (ITVYDLCHIGH) match the 'HIGH' region motif. 3 residues coordinate Zn(2+): Cys-209, His-234, and Glu-238. The short motif at 266 to 270 (KMSKS) is the 'KMSKS' region element. Residue Lys-269 participates in ATP binding.

The protein belongs to the class-I aminoacyl-tRNA synthetase family. In terms of assembly, monomer. It depends on Zn(2+) as a cofactor.

Its subcellular location is the cytoplasm. The catalysed reaction is tRNA(Cys) + L-cysteine + ATP = L-cysteinyl-tRNA(Cys) + AMP + diphosphate. The protein is Cysteine--tRNA ligase of Shigella boydii serotype 18 (strain CDC 3083-94 / BS512).